Reading from the N-terminus, the 254-residue chain is Probable WRKY transcription factor 67 (254 aa).

The WRKY DNA-binding region spans 102 to 170 (SRTMCPNDGF…YLGKHVCKAF (69 aa)).

This sequence belongs to the WRKY group III family.

Its subcellular location is the nucleus. In terms of biological role, transcription factor. Interacts specifically with the W box (5'-(T)TGAC[CT]-3'), a frequently occurring elicitor-responsive cis-acting element. This is Probable WRKY transcription factor 67 (WRKY67) from Arabidopsis thaliana (Mouse-ear cress).